We begin with the raw amino-acid sequence, 319 residues long: Lambda-crystallin homolog (319 aa).

Ala2 is modified (N-acetylalanine). At Ser3 the chain carries Phosphoserine. NAD(+) contacts are provided by residues 16–17, Asp36, Glu97, and Lys102; that span reads LI.

The protein belongs to the 3-hydroxyacyl-CoA dehydrogenase family. As to quaternary structure, homodimer.

It is found in the cytoplasm. It catalyses the reaction L-gulonate + NAD(+) = 3-dehydro-L-gulonate + NADH + H(+). Its activity is regulated as follows. Inhibited by malonate. Functionally, has high L-gulonate 3-dehydrogenase activity. It also exhibits low dehydrogenase activity toward L-3-hydroxybutyrate (HBA) and L-threonate. The chain is Lambda-crystallin homolog (Cryl1) from Rattus norvegicus (Rat).